A 352-amino-acid chain; its full sequence is Fatty acid synthase (352 aa).

The Ketosynthase family 3 (KS3) domain maps to 1–352 (MEDVVIAGIA…KVVLSLEHGL (352 aa)). Active-site for beta-ketoacyl synthase activity residues include C161, H293, and H331.

In terms of assembly, homodimer which monomers are arranged in a head to tail fashion.

It carries out the reaction acetyl-CoA + n malonyl-CoA + 2n NADPH + 2n H(+) = a long-chain fatty acid + (n+1) CoA + n CO2 + 2n NADP(+).. Fatty acid synthetase catalyzes the formation of long-chain fatty acids from acetyl-CoA, malonyl-CoA and NADPH. This multifunctional protein has 7 catalytic activities as an acyl carrier protein. The polypeptide is Fatty acid synthase (FASN) (Anser anser anser (Western greylag goose)).